The following is a 167-amino-acid chain: Dihydrofolate reductase (167 aa).

Residues 1–162 (MFISMWAQDK…YPHRFQKWQK (162 aa)) form the DHFR domain. Residues A7 and 13–19 (LIGKDGL) contribute to the NADP(+) site. D27 serves as a coordination point for substrate. Residue 45–46 (KT) coordinates NADP(+). R58 is a substrate binding site. Residues 64–65 (TT) and 99–106 (GGSRIFQA) each bind NADP(+). T117 is a binding site for substrate.

It belongs to the dihydrofolate reductase family.

It carries out the reaction (6S)-5,6,7,8-tetrahydrofolate + NADP(+) = 7,8-dihydrofolate + NADPH + H(+). Its pathway is cofactor biosynthesis; tetrahydrofolate biosynthesis; 5,6,7,8-tetrahydrofolate from 7,8-dihydrofolate: step 1/1. In terms of biological role, key enzyme in folate metabolism. Catalyzes an essential reaction for de novo glycine and purine synthesis, and for DNA precursor synthesis. The protein is Dihydrofolate reductase (folA) of Enterococcus faecium (Streptococcus faecium).